The primary structure comprises 192 residues: MKRYVVGISGASGIVLAVTLVSELARLGHHIDVIISPSAQKTLYYELDTKSFLSTIPQNFHNQIVLHHISSIESSVSSGSNTIDATIIVPCSVATVAAISCGLADNLLRRVADVALKEKRPLILVPREAPLSAIHLENLLKLAQNGAVILPPMPIWYFKPQTAEDIANDIVGKILAILQLDSPLIKRWENPR.

Residues 10–12, Ser-36, 92–95, and Arg-127 contribute to the FMN site; these read GAS and SVAT. Dimethylallyl phosphate-binding residues include Tyr-157 and Lys-173.

This sequence belongs to the UbiX/PAD1 family.

It catalyses the reaction dimethylallyl phosphate + FMNH2 = prenylated FMNH2 + phosphate. In terms of biological role, flavin prenyltransferase that catalyzes the synthesis of the prenylated FMN cofactor (prenyl-FMN) for 4-hydroxy-3-polyprenylbenzoic acid decarboxylase UbiD. The prenyltransferase is metal-independent and links a dimethylallyl moiety from dimethylallyl monophosphate (DMAP) to the flavin N5 and C6 atoms of FMN. The polypeptide is Flavin prenyltransferase UbiX (Chlamydia trachomatis serovar D (strain ATCC VR-885 / DSM 19411 / UW-3/Cx)).